The following is a 160-amino-acid chain: Serine-protein kinase RsbW (160 aa).

This sequence belongs to the anti-sigma-factor family.

The enzyme catalyses L-seryl-[protein] + ATP = O-phospho-L-seryl-[protein] + ADP + H(+). It catalyses the reaction L-threonyl-[protein] + ATP = O-phospho-L-threonyl-[protein] + ADP + H(+). Its function is as follows. Negative regulator of sigma-B activity. Phosphorylates and inactivates its specific antagonist protein, RsbV. Upon phosphorylation of RsbV, RsbW is released and binds to sigma-B, thereby blocking its ability to form an RNA polymerase holoenzyme (E-sigma-B). The sequence is that of Serine-protein kinase RsbW from Bacillus cereus (strain B4264).